The following is a 600-amino-acid chain: DNA mismatch repair protein MutL (600 aa).

Belongs to the DNA mismatch repair MutL/HexB family.

Its function is as follows. This protein is involved in the repair of mismatches in DNA. It is required for dam-dependent methyl-directed DNA mismatch repair. May act as a 'molecular matchmaker', a protein that promotes the formation of a stable complex between two or more DNA-binding proteins in an ATP-dependent manner without itself being part of a final effector complex. This Rickettsia typhi (strain ATCC VR-144 / Wilmington) protein is DNA mismatch repair protein MutL.